The sequence spans 323 residues: tRNA dimethylallyltransferase (323 aa).

Residue 27 to 34 (GPTGSGKT) participates in ATP binding. 29 to 34 (TGSGKT) contributes to the substrate binding site. 2 interaction with substrate tRNA regions span residues 52-55 (DSRQ) and 176-180 (QRIVR).

It belongs to the IPP transferase family. As to quaternary structure, monomer. Mg(2+) serves as cofactor.

It carries out the reaction adenosine(37) in tRNA + dimethylallyl diphosphate = N(6)-dimethylallyladenosine(37) in tRNA + diphosphate. Catalyzes the transfer of a dimethylallyl group onto the adenine at position 37 in tRNAs that read codons beginning with uridine, leading to the formation of N6-(dimethylallyl)adenosine (i(6)A). This is tRNA dimethylallyltransferase from Desulfovibrio desulfuricans (strain ATCC 27774 / DSM 6949 / MB).